The following is a 504-amino-acid chain: Cytochrome P450 monooxygenase braC (504 aa).

Residues 4–24 (LYLPTIWASTLTAATIFIVAV) form a helical membrane-spanning segment. Cys-448 contributes to the heme binding site.

Belongs to the cytochrome P450 family. Heme serves as cofactor.

The protein resides in the membrane. Its pathway is secondary metabolite biosynthesis. Functionally, cytochrome P450 monooxygenase; part of the gene cluster that mediates the biosynthesis of the brasilane terpene glycosides brasilane D and E. The biosynthesis starts with the activity of the terpene cyclase braA that converts farnesyl pyrophosphate into the sesquiterpene alcohol trichobrasilenol. Subsequently, trichobrasilenol is glycosylated by the O-glycosyltransferase braB putatively using UDP-GlcNAc as sugar donor to yield brasilane A. The latter then undergoes two rounds of oxidation performed by the cytochrome P450 monooxygenase braC. In the first round braC hydroxylates C-12 forming brasilane D, which serves as substrate in the second round to establish the epoxide at the bond between C-5 and C-10 and oxidize the alcohol at C-12 to an aldehyde leading to the final product brasilane E. The sequence is that of Cytochrome P450 monooxygenase braC from Annulohypoxylon truncatum (Hypoxylon truncatum).